A 493-amino-acid polypeptide reads, in one-letter code: MTTVRTRIAPSPTGDPHVGTAYIALFNYCFAKQHGGEFILRIEDTDQLRSTRESEQQIFDALRWLGIEWNEGPDVGGPHGPYRQSERGEIYARYAKQLVDAGHAFYCFCTAEELEQMRAEQMARGETPRYDGRALLLSDEEVQRRLAAGEPHVIRMKVPSEGICVVPDMLRGDVEIPWDRMDMQVLMKNDGLPTYFLANVVDDHLMGITHVLRGEEWLPSAPKLIKLYEYFGWEQPKLCYMPLLRNPDKSKLSKRKNPTSVTFYERMGFMPEAMLNYLGRMGWSMPDEREKFSLAEMVEHFDLSRISLGGPIFDIEKLSWLNGQWLRELPVEEFAARVQKWAFNSDYMMKIAPHVQGRVETFSQIAPLGGFFFEGALKLDAKLFESKKLSADQVRQVMQLILWKLESLRQWEKERITGCIQAVVEALELKLRDAMPLMFAAITGQASSVSVLDAMEILGPDLTRYRLRQALDLLGGVSKKENKEWEKLLANIA.

Positions 10 to 20 (PSPTGDPHVGT) match the 'HIGH' region motif. The 'KMSKS' region signature appears at 251 to 255 (KLSKR). Lys254 provides a ligand contact to ATP.

Belongs to the class-I aminoacyl-tRNA synthetase family. Glutamate--tRNA ligase type 1 subfamily. As to quaternary structure, monomer.

Its subcellular location is the cytoplasm. It carries out the reaction tRNA(Glu) + L-glutamate + ATP = L-glutamyl-tRNA(Glu) + AMP + diphosphate. In terms of biological role, catalyzes the attachment of glutamate to tRNA(Glu) in a two-step reaction: glutamate is first activated by ATP to form Glu-AMP and then transferred to the acceptor end of tRNA(Glu). This Pseudomonas putida (strain W619) protein is Glutamate--tRNA ligase.